The sequence spans 357 residues: Prostaglandin D2 receptor (357 aa).

The Extracellular segment spans residues 1-20 (MNESYRCQTSTWVERGSSAT). N2 carries an N-linked (GlcNAc...) asparagine glycan. Residues 21–41 (MGAVLFGAGLLGNLLALVLLA) traverse the membrane as a helical segment. Over 42 to 58 (RSGLGSCRPGPLHPPPS) the chain is Cytoplasmic. The helical transmembrane segment at 59–79 (VFYVLVCGLTVTDLLGKCLIS) threads the bilayer. Over 80 to 106 (PMVLAAYAQNQSLKELLPASGNQLCET) the chain is Extracellular. N89 carries an N-linked (GlcNAc...) asparagine glycan. C104 and C182 are oxidised to a cystine. The helical transmembrane segment at 107–127 (FAFLMSFFGLASTLQLLAMAV) threads the bilayer. Residues 128–149 (ECWLSLGHPFFYQRHVTLRRGV) lie on the Cytoplasmic side of the membrane. A helical membrane pass occupies residues 150 to 170 (LVAPVVAAFCLAFCALPFAGF). Residues 171–194 (GKFVQYCPGTWCFIQMIHKERSFS) are Extracellular-facing. The helical transmembrane segment at 195–215 (VIGFSVLYSSLMALLVLATVV) threads the bilayer. The Cytoplasmic segment spans residues 216-261 (CNLGAMYNLYDMHRRQRHYPHRCSRDRAQSGSDYRHGSLHPLEELD). Residues 262-282 (HFVLLALMTVLFTMCSLPLIY) form a helical membrane-spanning segment. At 283–306 (RAYYGAFKLENKAEGDSEDLQALR) the chain is on the extracellular side. A helical membrane pass occupies residues 307–327 (FLSVISIVDPWIFIIFRTSVF). The Cytoplasmic portion of the chain corresponds to 328–357 (RMLFHKVFTRPLIYRNWSSHSQQSNVESTL).

This sequence belongs to the G-protein coupled receptor 1 family. As to expression, most abundantly expressed in the ileum, followed by lung, stomach and uterus.

It localises to the cell membrane. In terms of biological role, receptor for prostaglandin D2 (PGD2). The activity of this receptor is mainly mediated by G(s) proteins that stimulate adenylate cyclase, resulting in an elevation of intracellular cAMP. A mobilization of calcium is also observed, but without formation of inositol 1,4,5-trisphosphate. Involved in PLA2G3-dependent maturation of mast cells. PLA2G3 is secreted by immature mast cells and acts on nearby fibroblasts upstream to PTDGS to synthesize PGD2, which in turn promotes mast cell maturation and degranulation via PTGDR. The sequence is that of Prostaglandin D2 receptor (Ptgdr) from Mus musculus (Mouse).